The primary structure comprises 609 residues: Membrane protein insertase YidC (609 aa).

A run of 5 helical transmembrane segments spans residues 8–28, 381–401, 451–471, 509–529, and 545–565; these read LILA…LFPP, MGWS…PLAL, LPIL…FVTI, SLTA…SMWL, and IFAW…SGLV.

Belongs to the OXA1/ALB3/YidC family. Type 1 subfamily. Interacts with the Sec translocase complex via SecD. Specifically interacts with transmembrane segments of nascent integral membrane proteins during membrane integration.

It localises to the cell inner membrane. In terms of biological role, required for the insertion and/or proper folding and/or complex formation of integral membrane proteins into the membrane. Involved in integration of membrane proteins that insert both dependently and independently of the Sec translocase complex, as well as at least some lipoproteins. Aids folding of multispanning membrane proteins. The sequence is that of Membrane protein insertase YidC from Ruegeria pomeroyi (strain ATCC 700808 / DSM 15171 / DSS-3) (Silicibacter pomeroyi).